Reading from the N-terminus, the 266-residue chain is NADP-dependent mannitol dehydrogenase (266 aa).

T31, I33, N107, and R140 together coordinate NADP(+). S159 serves as the catalytic Proton donor. NADP(+)-binding residues include Y174, K178, I206, and T208. Y174 functions as the Proton acceptor in the catalytic mechanism. K178 functions as the Lowers pKa of active site Tyr in the catalytic mechanism.

Belongs to the short-chain dehydrogenases/reductases (SDR) family. As to quaternary structure, homotetramer.

The protein localises to the vacuole. The enzyme catalyses D-mannitol + NADP(+) = D-fructose + NADPH + H(+). The polypeptide is NADP-dependent mannitol dehydrogenase (Alternaria alternata (Alternaria rot fungus)).